The chain runs to 98 residues: NADH-ubiquinone oxidoreductase chain 4L (98 aa).

A run of 3 helical transmembrane segments spans residues Met-1–Met-21, Ser-29–Leu-49, and Val-61–Val-81.

This sequence belongs to the complex I subunit 4L family. As to quaternary structure, core subunit of respiratory chain NADH dehydrogenase (Complex I) which is composed of 45 different subunits.

The protein localises to the mitochondrion inner membrane. It catalyses the reaction a ubiquinone + NADH + 5 H(+)(in) = a ubiquinol + NAD(+) + 4 H(+)(out). Functionally, core subunit of the mitochondrial membrane respiratory chain NADH dehydrogenase (Complex I) which catalyzes electron transfer from NADH through the respiratory chain, using ubiquinone as an electron acceptor. Part of the enzyme membrane arm which is embedded in the lipid bilayer and involved in proton translocation. In Tamandua tetradactyla (Southern anteater), this protein is NADH-ubiquinone oxidoreductase chain 4L (MT-ND4L).